Here is a 1790-residue protein sequence, read N- to C-terminus: Cytokinesis protein sepA (1790 aa).

Disordered regions lie at residues 1–275 and 328–350; these read MPTS…YLTR and GEQKRKQKARETHGYDGPSGILE. Residues 24-35 are compositionally biased toward basic and acidic residues; that stretch reads ERPVEDRWDAHG. Composition is skewed to low complexity over residues 39 to 62 and 187 to 203; these read SLAPPSSAAGSRSSRYSKRSSIQS and SHHSSSTVDSSTNSRMS. Over residues 205–236 the composition is skewed to polar residues; that stretch reads DQASIHSSLSSNTRGSSYISTDGSSRTTLPSH. Residues 274-702 enclose the GBD/FH3 domain; that stretch reads TRPRDDRVVD…YVAMDRRLPD (429 aa). The segment covering 328 to 341 has biased composition (basic and acidic residues); the sequence is GEQKRKQKARETHG. A coiled-coil region spans residues 724–811; the sequence is AEARRAYDES…QRNELETREL (88 aa). The 182-residue stretch at 955–1136 folds into the FH1 domain; sequence DPEQATGLLG…NYLASQGAPS (182 aa). Positions 975-986 are enriched in basic and acidic residues; the sequence is ADDAKDEGKPTE. Disordered regions lie at residues 975-1119, 1465-1484, and 1596-1790; these read ADDA…PPGT, NLSDPKKFHPQDRVSQITQR, and RAAA…PSTS. Pro residues-rich tracts occupy residues 1015-1026 and 1033-1118; these read APPPPPPPPPAH and APPP…PPPG. The FH2 domain maps to 1141–1564; the sequence is VMSSIRPKKK…TEASLARKRI (424 aa). The stretch at 1435 to 1566 forms a coiled coil; it reads LQKLNVDQLR…ASLARKRINV (132 aa). One can recognise a DAD domain in the interval 1581–1613; the sequence is SPATSGAMDSLLEKLRAAAPQAKDQRDRRRRAR. Basic residues predominate over residues 1608–1620; that stretch reads RRRRARLKERHQV. Residues 1644–1661 are compositionally biased toward polar residues; sequence SGATDTNATDSSLLSPTI. Residues 1694–1710 are compositionally biased toward basic and acidic residues; it reads PDPERTRRRRESAEEER. Over residues 1720–1746 the composition is skewed to polar residues; that stretch reads GATSGSKDSNDTTPLSPVTEPTSTQGE.

Belongs to the formin homology family. BNI1 subfamily.

In terms of biological role, involved in cytokinesis. Overexpression results in growth inhibition. This chain is Cytokinesis protein sepA (sepA), found in Emericella nidulans (strain FGSC A4 / ATCC 38163 / CBS 112.46 / NRRL 194 / M139) (Aspergillus nidulans).